We begin with the raw amino-acid sequence, 98 residues long: NADH-ubiquinone oxidoreductase chain 4L (98 aa).

A run of 3 helical transmembrane segments spans residues 1–21 (MPSI…GVLI), 26–46 (LMSS…LVSL), and 61–81 (IILL…LVMV).

Belongs to the complex I subunit 4L family. Core subunit of respiratory chain NADH dehydrogenase (Complex I) which is composed of 45 different subunits.

The protein localises to the mitochondrion inner membrane. The catalysed reaction is a ubiquinone + NADH + 5 H(+)(in) = a ubiquinol + NAD(+) + 4 H(+)(out). Core subunit of the mitochondrial membrane respiratory chain NADH dehydrogenase (Complex I) which catalyzes electron transfer from NADH through the respiratory chain, using ubiquinone as an electron acceptor. Part of the enzyme membrane arm which is embedded in the lipid bilayer and involved in proton translocation. This chain is NADH-ubiquinone oxidoreductase chain 4L (MT-ND4L), found in Galago senegalensis (Northern lesser bushbaby).